The primary structure comprises 585 residues: Aspartate--tRNA ligase (585 aa).

Glu-173 provides a ligand contact to L-aspartate. The aspartate stretch occupies residues Gln-197–Lys-200. Arg-219 is an L-aspartate binding site. Residues Arg-219–Glu-221 and Gln-228 each bind ATP. His-446 contacts L-aspartate. An ATP-binding site is contributed by Glu-480. Arg-487 is a binding site for L-aspartate. Gly-532–Arg-535 contacts ATP.

This sequence belongs to the class-II aminoacyl-tRNA synthetase family. Type 1 subfamily. Homodimer.

It is found in the cytoplasm. It catalyses the reaction tRNA(Asp) + L-aspartate + ATP = L-aspartyl-tRNA(Asp) + AMP + diphosphate. In terms of biological role, catalyzes the attachment of L-aspartate to tRNA(Asp) in a two-step reaction: L-aspartate is first activated by ATP to form Asp-AMP and then transferred to the acceptor end of tRNA(Asp). In Parabacteroides distasonis (strain ATCC 8503 / DSM 20701 / CIP 104284 / JCM 5825 / NCTC 11152), this protein is Aspartate--tRNA ligase.